The following is a 2963-amino-acid chain: tRNA nuclease CdiA (2963 aa).

Positions 1 to 29 (MIPIYLRQKLISYALIYLVAIQPIMPVMA) are cleaved as a signal peptide. The tract at residues 35 to 320 (AQGSTALDKA…AQGNITLNSH (286 aa)) is two-partner system transport domain (TPS). The interval 573–1074 (GNVVAQEHAQ…MVLNTASLLN (502 aa)) is FHA-1. The receptor binding domain (RBD) stretch occupies residues 1075-1342 (RRDGFSVTEK…KPLTRAQLSD (268 aa)). The interval 1343-1528 (YPLPDSNNGL…LAKAEQAHLQ (186 aa)) is YP domain. A periplasmic FHA-1 repeat (pFR) region spans residues 1529–1751 (GSVISGNKVE…ATLQAERDVN (223 aa)). The segment covering 1759–1770 (TRNQHIDSEDKT) has biased composition (basic and acidic residues). 2 disordered regions span residues 1759–1787 (TRNQHIDSEDKTTGYTRSTLSSGGDLTAS) and 1992–2012 (SKSSRQQINQEGSKQSESASA). The tract at residues 1762-2314 (QHIDSEDKTT…DSDNYNSIQK (553 aa)) is FHA-2. A compositionally biased stretch (polar residues) spans 1771 to 1782 (TGYTRSTLSSGG). Residues 2694–2697 (VEDN) carry the VEDN CT cleavage motif motif. A C-terminal effector domain (CT) region spans residues 2694–2963 (VEDNNLSFGK…TGRVRNFHPN (270 aa)).

In the N-terminal section; belongs to the CdiA toxin family. This sequence in the C-terminal section; belongs to the bacterial EndoU family. As to quaternary structure, forms a 1:1 complex with cognate immunity protein CdiI.

It localises to the secreted. The protein localises to the target cell. Its subcellular location is the target cell cytoplasm. Toxic component of a toxin-immunity protein module, which functions as a cellular contact-dependent growth inhibition (CDI) system. CDI modules allow bacteria to communicate with and inhibit the growth of closely related neighboring bacteria in a contact-dependent fashion. Targeting of the CT domain (residues 2824-2963) in the absence of immunity protein inhibits cell growth and causes tRNA(UUC-Glu) cleavage in the anticodon loop; expression of cognate immunity protein CdiI-43969 neutralizes growth inhibition and tRNA(UUC-Glu) remains intact, whereas non-cognate immunity proteins do not confer protection from the toxic effects. Its function is as follows. The CdiA protein is thought to be exported from the cell through the central lumen of CdiB, the other half of its two-partner system (TPS). The TPS domain probably remains associated with CdiB while the FHA-1 domain forms an extended filament with the receptor-binding domain (RBD) at its extremity; in the secretion arrested state the C-terminus of the RBD and YP domains form a hairpin-like structure as the FHA-2, PT and CT domains are periplasmic. The YP domain is probably responsible for this arrest at the point where it re-enters the host cell periplasm. Upon binding to a target cell outer membrane receptor a signal is transmitted to activate secretion. The filament elongates slightly, the rest of CdiA is secreted and the FHA-2 domain becomes stably associated with the target cell's outer membrane where it facilitates entry of the toxic CT domain into the target cell periplasm. From there the toxic CT domain is cleaved and gains access to the target cell cytoplasm via an inner membrane protein. The chain is tRNA nuclease CdiA from Yersinia mollaretii (strain ATCC 43969 / DSM 18520 / CIP 103324 / CNY 7263 / WAIP 204).